A 255-amino-acid chain; its full sequence is Thiazole synthase (255 aa).

The active-site Schiff-base intermediate with DXP is the lysine 95. Residues glycine 156, 182–183 (AG), and 204–205 (NT) each bind 1-deoxy-D-xylulose 5-phosphate.

This sequence belongs to the ThiG family. Homotetramer. Forms heterodimers with either ThiH or ThiS.

It is found in the cytoplasm. The catalysed reaction is [ThiS sulfur-carrier protein]-C-terminal-Gly-aminoethanethioate + 2-iminoacetate + 1-deoxy-D-xylulose 5-phosphate = [ThiS sulfur-carrier protein]-C-terminal Gly-Gly + 2-[(2R,5Z)-2-carboxy-4-methylthiazol-5(2H)-ylidene]ethyl phosphate + 2 H2O + H(+). It participates in cofactor biosynthesis; thiamine diphosphate biosynthesis. Catalyzes the rearrangement of 1-deoxy-D-xylulose 5-phosphate (DXP) to produce the thiazole phosphate moiety of thiamine. Sulfur is provided by the thiocarboxylate moiety of the carrier protein ThiS. In vitro, sulfur can be provided by H(2)S. In Vibrio parahaemolyticus serotype O3:K6 (strain RIMD 2210633), this protein is Thiazole synthase.